Consider the following 391-residue polypeptide: Elongation factor Tu (391 aa).

A tr-type G domain is found at K10–A201. A G1 region spans residues G19–T26. Residue G19–T26 coordinates GTP. Mg(2+) is bound at residue T26. The interval G55 to S59 is G2. Positions D76 to G79 are G3. Residues D76–H80 and N131–D134 each bind GTP. Positions N131–D134 are G4. Positions S169–L171 are G5.

The protein belongs to the TRAFAC class translation factor GTPase superfamily. Classic translation factor GTPase family. EF-Tu/EF-1A subfamily. Monomer.

The protein resides in the cytoplasm. It catalyses the reaction GTP + H2O = GDP + phosphate + H(+). Functionally, GTP hydrolase that promotes the GTP-dependent binding of aminoacyl-tRNA to the A-site of ribosomes during protein biosynthesis. The sequence is that of Elongation factor Tu from Dinoroseobacter shibae (strain DSM 16493 / NCIMB 14021 / DFL 12).